We begin with the raw amino-acid sequence, 204 residues long: FlaA locus 22.9 kDa protein (204 aa).

Residues 115–140 form a disordered region; that stretch reads EKTAEDQKKSSEDHTEGSADSKASSE.

The chain is FlaA locus 22.9 kDa protein (ylxF) from Bacillus subtilis (strain 168).